The sequence spans 358 residues: Adenosine deaminase (358 aa).

Positions 14 and 16 each coordinate Zn(2+). The substrate site is built by histidine 16, aspartate 18, and glycine 183. Histidine 212 provides a ligand contact to Zn(2+). Residue glutamate 215 is the Proton donor of the active site. Residue aspartate 294 coordinates Zn(2+). Substrate is bound at residue aspartate 295.

Belongs to the metallo-dependent hydrolases superfamily. Adenosine and AMP deaminases family. Zn(2+) is required as a cofactor.

It is found in the cell membrane. Its subcellular location is the cell junction. The protein localises to the cytoplasmic vesicle lumen. The protein resides in the cytoplasm. It localises to the lysosome. The catalysed reaction is adenosine + H2O + H(+) = inosine + NH4(+). It carries out the reaction 2'-deoxyadenosine + H2O + H(+) = 2'-deoxyinosine + NH4(+). Catalyzes the hydrolytic deamination of adenosine and 2-deoxyadenosine. Plays an important role in purine metabolism and in adenosine homeostasis. Modulates signaling by extracellular adenosine, and so contributes indirectly to cellular signaling events. May act as a positive regulator of T-cell coactivation. The protein is Adenosine deaminase (ada) of Xenopus tropicalis (Western clawed frog).